Here is a 608-residue protein sequence, read N- to C-terminus: Translation initiation factor RLI1 (608 aa).

2 4Fe-4S ferredoxin-type domains span residues 7 to 39 (RIAI…KLCI) and 46 to 75 (KIAF…IINL). ABC transporter domains follow at residues 70 to 320 (IQII…FLDG) and 345 to 568 (LQND…LKNL). An ATP-binding site is contributed by 110 to 117 (GTNGIGKS). A Phosphoserine modification is found at Ser-349. 385–392 (GENGTGKT) contributes to the ATP binding site.

The protein belongs to the ABC transporter superfamily. ABCE family. In terms of assembly, component of the multifactor complex (MFC) composed of at least RLI1, the eIF2 subunit SUI2, TIF5/eIF5, and the eIF3 subunits PRT1, HCR1, NIP1, RPG1, TIF34 and TIF35. The complex associates with pre-initiation complexes. Interacts with the complex YAE1:LTO1; the complex bridges the interaction between the CIA complex and RLI1.

The protein resides in the cytoplasm. It is found in the nucleus. Functionally, component of the multifactor complex (MFC) involved in translation initiation. Required for the binding of MFC to the 40S ribosome. Required for the processing and nuclear export of the 60S and 40S ribosomal subunits. The chain is Translation initiation factor RLI1 (RLI1) from Saccharomyces cerevisiae (strain ATCC 204508 / S288c) (Baker's yeast).